The sequence spans 528 residues: Glucans biosynthesis protein G 2 (528 aa).

The first 44 residues, 1–44 (MRLHLTFNHSTPATGRKNTKHTLFFGSMLACIISIISLVVPAYG), serve as a signal peptide directing secretion.

It belongs to the OpgD/OpgG family.

The protein resides in the periplasm. It functions in the pathway glycan metabolism; osmoregulated periplasmic glucan (OPG) biosynthesis. Its function is as follows. Involved in the biosynthesis of osmoregulated periplasmic glucans (OPGs). This is Glucans biosynthesis protein G 2 (opgG2) from Shewanella oneidensis (strain ATCC 700550 / JCM 31522 / CIP 106686 / LMG 19005 / NCIMB 14063 / MR-1).